The sequence spans 530 residues: Glutamyl-tRNA reductase 2, chloroplastic (530 aa).

Residues 1-64 constitute a chloroplast transit peptide; that stretch reads MAVSSAFVVT…RCEISPSNKA (64 aa). Residues 134-137, serine 194, 199-201, and glutamine 205 each bind substrate; these read TCNR and EGQ. Residue cysteine 135 is the Nucleophile of the active site. NADP(+) is bound at residue 277–282; sequence GAGKMG.

It belongs to the glutamyl-tRNA reductase family. In terms of tissue distribution, expressed in roots and flowers. Detected in leaves, hypocotyls and cotyledons.

The protein resides in the plastid. Its subcellular location is the chloroplast. The enzyme catalyses (S)-4-amino-5-oxopentanoate + tRNA(Glu) + NADP(+) = L-glutamyl-tRNA(Glu) + NADPH + H(+). It functions in the pathway porphyrin-containing compound metabolism; protoporphyrin-IX biosynthesis; 5-aminolevulinate from L-glutamyl-tRNA(Glu): step 1/2. The protein operates within porphyrin-containing compound metabolism; chlorophyll biosynthesis. Its function is as follows. Catalyzes the NADPH-dependent reduction of glutamyl-tRNA(Glu) to glutamate 1-semialdehyde (GSA). Probably involved in wound-induced supply of heme to defensive hemoproteins outside plastids. In Arabidopsis thaliana (Mouse-ear cress), this protein is Glutamyl-tRNA reductase 2, chloroplastic (HEMA2).